Reading from the N-terminus, the 668-residue chain is DNA ligase (668 aa).

Residues 32 to 36, 81 to 82, and Glu113 each bind NAD(+); these read DAEYD and SL. Lys115 (N6-AMP-lysine intermediate) is an active-site residue. Residues Arg136, Glu173, Lys289, and Lys313 each coordinate NAD(+). Cys407, Cys410, Cys425, and Cys431 together coordinate Zn(2+). The BRCT domain occupies 590 to 668; it reads ASEQPFAGKT…EEELQQALQG (79 aa).

The protein belongs to the NAD-dependent DNA ligase family. LigA subfamily. Requires Mg(2+) as cofactor. Mn(2+) serves as cofactor.

It catalyses the reaction NAD(+) + (deoxyribonucleotide)n-3'-hydroxyl + 5'-phospho-(deoxyribonucleotide)m = (deoxyribonucleotide)n+m + AMP + beta-nicotinamide D-nucleotide.. Its function is as follows. DNA ligase that catalyzes the formation of phosphodiester linkages between 5'-phosphoryl and 3'-hydroxyl groups in double-stranded DNA using NAD as a coenzyme and as the energy source for the reaction. It is essential for DNA replication and repair of damaged DNA. This is DNA ligase from Aeromonas hydrophila subsp. hydrophila (strain ATCC 7966 / DSM 30187 / BCRC 13018 / CCUG 14551 / JCM 1027 / KCTC 2358 / NCIMB 9240 / NCTC 8049).